Consider the following 114-residue polypeptide: Large ribosomal subunit protein uL22 (114 aa).

It belongs to the universal ribosomal protein uL22 family. In terms of assembly, part of the 50S ribosomal subunit.

In terms of biological role, this protein binds specifically to 23S rRNA; its binding is stimulated by other ribosomal proteins, e.g. L4, L17, and L20. It is important during the early stages of 50S assembly. It makes multiple contacts with different domains of the 23S rRNA in the assembled 50S subunit and ribosome. Functionally, the globular domain of the protein is located near the polypeptide exit tunnel on the outside of the subunit, while an extended beta-hairpin is found that lines the wall of the exit tunnel in the center of the 70S ribosome. In Streptococcus agalactiae serotype Ia (strain ATCC 27591 / A909 / CDC SS700), this protein is Large ribosomal subunit protein uL22.